The sequence spans 119 residues: BLOC-1-related complex subunit 8 (119 aa).

Ser109 is subject to Phosphoserine.

This sequence belongs to the BORCS8 family. In terms of assembly, component of the BLOC-one-related complex (BORC) which is composed of BLOC1S1, BLOC1S2, BORCS5, BORCS6, BORCS7, BORCS8, KXD1 and SNAPIN.

Its subcellular location is the lysosome membrane. As part of the BLOC-one-related complex (BORC), it plays a role in the movement and localization of lysosomes at the cell periphery. Associated with the cytosolic face of lysosomes, BORC recruits ARL8B to the lysosomal membrane and couples lysosomes to microtubule plus-end-directed kinesin motors, driving lysosome movement toward the cell periphery. The sequence is that of BLOC-1-related complex subunit 8 from Homo sapiens (Human).